The chain runs to 592 residues: MMATCTPRKRKRYTLNADNDDSLLTDISSSKLRCAENLFPSPNKKHNYQSSVQKEDKSCSHQLHFPSSPLKTTENSRFSFANHSSLFKPAMSTVSFYSKEKYYLNPLERKLIRECRSICLATESGDKPIPSVTENIQRKPVCTKKNKKKQKSLTAKYQPNYKHIKSKSRNLKNSKPNQVTYKPVVDQENSCFPAKNYPNSPPRVLSQKIKPQVTLQGGAAFFVRKRNSLKKLPLEDKPLLLQKNLPEVPEGAPEAKQIPKSLLVDEKSSVKVQNARSKNEEKLRKNPSGAVVSSKECNLDKHDFPSENSLDENKTISPESVYPIFNVSSVNTKRPEEQSSVGSTACTNFLKQTNVPKNINSRDTNKGGKDQLVIDAGQKHFGTTVCKSCGMIYTASNPEDEIQHLQHHHRFLEGIKFVGWKRERVVAEFWDGKIVLVLPRDPSYAIKKVEDVQELVDLELGFQQTVPVCPDKTKTFLFIDEKRVVGCLIAEPIKQAFRVLSEPSASKECSRAWRCSDVPEPAICGISRIWVFRLKRRKRIARRLVDTVRNCFMFGCFLSTNEIAFSDPTPDGKLFATKYCNTPNFLVYNFHN.

Phosphoserine is present on residues S41 and S85. A disordered region spans residues 267–294 (KSSVKVQNARSKNEEKLRKNPSGAVVSS). Phosphoserine is present on S309. The CCHH-type zinc-finger motif lies at 384–408 (TVCKSCGMIYTASNPEDEIQHLQHH).

Belongs to the acetyltransferase family. ECO subfamily.

It localises to the nucleus. The protein localises to the chromosome. It catalyses the reaction L-lysyl-[protein] + acetyl-CoA = N(6)-acetyl-L-lysyl-[protein] + CoA + H(+). In terms of biological role, acetyltransferase required for the establishment of sister chromatid cohesion. Couples the processes of cohesion and DNA replication to ensure that only sister chromatids become paired together. In contrast to the structural cohesins, the deposition and establishment factors are required only during the S phase. Acetylates the cohesin component SMC3. In Mus musculus (Mouse), this protein is N-acetyltransferase ESCO2 (Esco2).